The primary structure comprises 236 residues: Large ribosomal subunit protein uL3 (236 aa).

This sequence belongs to the universal ribosomal protein uL3 family. Part of the 50S ribosomal subunit. Forms a cluster with proteins L14 and L19.

In terms of biological role, one of the primary rRNA binding proteins, it binds directly near the 3'-end of the 23S rRNA, where it nucleates assembly of the 50S subunit. The chain is Large ribosomal subunit protein uL3 from Anaeromyxobacter dehalogenans (strain 2CP-C).